The chain runs to 288 residues: Diaminopimelate epimerase (288 aa).

Positions 17, 47, and 67 each coordinate substrate. Cys-76 (proton donor) is an active-site residue. Residues 77 to 78 (GN), Asn-164, Asn-197, and 215 to 216 (ER) each bind substrate. Cys-224 functions as the Proton acceptor in the catalytic mechanism. 225–226 (GS) is a binding site for substrate.

It belongs to the diaminopimelate epimerase family. In terms of assembly, homodimer.

The protein localises to the cytoplasm. It carries out the reaction (2S,6S)-2,6-diaminopimelate = meso-2,6-diaminopimelate. It functions in the pathway amino-acid biosynthesis; L-lysine biosynthesis via DAP pathway; DL-2,6-diaminopimelate from LL-2,6-diaminopimelate: step 1/1. Catalyzes the stereoinversion of LL-2,6-diaminopimelate (L,L-DAP) to meso-diaminopimelate (meso-DAP), a precursor of L-lysine and an essential component of the bacterial peptidoglycan. The polypeptide is Diaminopimelate epimerase (Rhodopseudomonas palustris (strain BisA53)).